A 326-amino-acid chain; its full sequence is Cytosolic sulfotransferase 12 (326 aa).

75-80 (KSGTTW) lines the 3'-phosphoadenylyl sulfate pocket. Catalysis depends on His-140, which acts as the Proton acceptor. 3'-phosphoadenylyl sulfate is bound by residues Arg-162, Ser-170, Tyr-228, and 290–292 (RKG).

Belongs to the sulfotransferase 1 family. Dimer. As to expression, expressed in the aerial parts of seedlings, in roots, leaves and flowers. Not detected in stems and siliques.

The protein resides in the cytoplasm. Its function is as follows. Sulfotransferase that utilizes 3'-phospho-5'-adenylyl sulfate (PAPS) as sulfonate donor to catalyze the stereospecific sulfate conjugation of 24-epibrassinosteroids. Preferred substrates are 24-epicathasterone and 6-deoxo-24-epicathasterone. Low activity with 22-deoxy-24-epiteasterone. No activity with 24-epimers catasterone and brassinolide. Sulfonates salicylic acid. May be involved in detoxification. Enhances plant response to pathogen infection and contributes to long distance signaling in systemic acquired resistance (SAR). The sequence is that of Cytosolic sulfotransferase 12 (SOT12) from Arabidopsis thaliana (Mouse-ear cress).